The primary structure comprises 282 residues: Acetyl-coenzyme A carboxylase carboxyl transferase subunit beta (282 aa).

A CoA carboxyltransferase N-terminal domain is found at Val-25–Gln-282. Zn(2+) is bound by residues Cys-29, Cys-32, Cys-48, and Cys-51. The segment at Cys-29–Cys-51 adopts a C4-type zinc-finger fold.

This sequence belongs to the AccD/PCCB family. In terms of assembly, acetyl-CoA carboxylase is a heterohexamer composed of biotin carboxyl carrier protein (AccB), biotin carboxylase (AccC) and two subunits each of ACCase subunit alpha (AccA) and ACCase subunit beta (AccD). Requires Zn(2+) as cofactor.

The protein resides in the cytoplasm. The catalysed reaction is N(6)-carboxybiotinyl-L-lysyl-[protein] + acetyl-CoA = N(6)-biotinyl-L-lysyl-[protein] + malonyl-CoA. The protein operates within lipid metabolism; malonyl-CoA biosynthesis; malonyl-CoA from acetyl-CoA: step 1/1. Functionally, component of the acetyl coenzyme A carboxylase (ACC) complex. Biotin carboxylase (BC) catalyzes the carboxylation of biotin on its carrier protein (BCCP) and then the CO(2) group is transferred by the transcarboxylase to acetyl-CoA to form malonyl-CoA. The protein is Acetyl-coenzyme A carboxylase carboxyl transferase subunit beta of Syntrophotalea carbinolica (strain DSM 2380 / NBRC 103641 / GraBd1) (Pelobacter carbinolicus).